The sequence spans 553 residues: Glutamyl-tRNA(Gln) amidotransferase subunit B, mitochondrial (553 aa).

The transit peptide at Met1–Tyr18 directs the protein to the mitochondrion.

This sequence belongs to the GatB/GatE family. GatB subfamily. As to quaternary structure, subunit of the heterotrimeric GatCAB amidotransferase (AdT) complex, composed of A (qrsl1), B (gatb) and C (gatc) subunits.

The protein localises to the mitochondrion. It carries out the reaction L-glutamyl-tRNA(Gln) + L-glutamine + ATP + H2O = L-glutaminyl-tRNA(Gln) + L-glutamate + ADP + phosphate + H(+). Allows the formation of correctly charged Gln-tRNA(Gln) through the transamidation of misacylated Glu-tRNA(Gln) in the mitochondria. The reaction takes place in the presence of glutamine and ATP through an activated gamma-phospho-Glu-tRNA(Gln). The chain is Glutamyl-tRNA(Gln) amidotransferase subunit B, mitochondrial from Danio rerio (Zebrafish).